A 396-amino-acid chain; its full sequence is MVVFSKVTASLACFSAVVSAAAVPVKSPRQGFSVNQVQKTVTGTRTVNLPGVYANALAKYGATVPANVHAAAVSGSAITTPEENDVEYLTPVKIGESTLNLDFDTGSADLWVFSTELSSAEQSGHDVYDVSSSGKKLTGASWSISYGDGSGASGDVYKDTVTVGGVKATGQAVEAAKKISQQFVQDKSNDGLLGLAFSSINTVSPKPQTTFFDTVKSDLDKPLFAVTLKHGAPGTYDFGYIDKKKFTGSLTYTDVDNSQGFWSFTADSYKVGTGSAGPSIEGIADTGTTLLLLDDGVVSDYYKKVDGAKNNYSAGGYVFPCDADLPDFTVTIGSYDAVVPGKHIKYAPVTTGSSSCFGGIQSNSGIGFSIFGDIFLKSQYVVFDAEGPRLGFAAQA.

The N-terminal stretch at 1-20 (MVVFSKVTASLACFSAVVSA) is a signal peptide. The propeptide at 21 to 72 (AAVPVKSPRQGFSVNQVQKTVTGTRTVNLPGVYANALAKYGATVPANVHAAA) is activation peptide. The Peptidase A1 domain maps to 88 to 393 (YLTPVKIGES…DAEGPRLGFA (306 aa)). Catalysis depends on residues aspartate 104 and aspartate 285. Residue asparagine 311 is glycosylated (N-linked (GlcNAc...) asparagine). Cysteine 321 and cysteine 356 form a disulfide bridge.

This sequence belongs to the peptidase A1 family. In terms of assembly, monomer.

It localises to the secreted. It carries out the reaction Hydrolysis of proteins with broad specificity similar to that of pepsin A, preferring hydrophobic residues at P1 and P1', but also cleaving 20-Gly-|-Glu-21 in the B chain of insulin. Clots milk, and activates trypsinogen.. In terms of biological role, secreted aspartic endopeptidase that allows assimilation of proteinaceous substrates. The scissile peptide bond is attacked by a nucleophilic water molecule activated by two aspartic residues in the active site. Shows a broad primary substrate specificity. Favors hydrophobic residues at the P1 and P1' positions, but can also activate trypsinogen and hydrolyze the B chain of insulin between positions 'Gly-20' and 'Glu-21'. The chain is Penicillopepsin-1 (pepA) from Penicillium rubens (strain ATCC 28089 / DSM 1075 / NRRL 1951 / Wisconsin 54-1255) (Penicillium chrysogenum).